The primary structure comprises 231 residues: Protein N-terminal glutamine amidohydrolase (231 aa).

The disordered stretch occupies residues 1 to 21; it reads MADDRVAGGATPPPPPPPPPL. The span at 11-21 shows a compositional bias: pro residues; sequence TPPPPPPPPPL. Residues Cys33, His89, and Asp108 contribute to the active site.

The protein belongs to the NTAQ1 family. In terms of assembly, monomer.

The enzyme catalyses N-terminal L-glutaminyl-[protein] + H2O = N-terminal L-glutamyl-[protein] + NH4(+). In terms of biological role, mediates the side-chain deamidation of N-terminal glutamine residues to glutamate, an important step in N-end rule pathway of protein degradation. Conversion of the resulting N-terminal glutamine to glutamate renders the protein susceptible to arginylation, polyubiquitination and degradation as specified by the N-end rule. Does not act on substrates with internal or C-terminal glutamine and does not act on non-glutamine residues in any position. The sequence is that of Protein N-terminal glutamine amidohydrolase from Oryza sativa subsp. indica (Rice).